Consider the following 327-residue polypeptide: MDVLNKSIQTALEALPKTSSSSSDGVSLVSLKCQLLLSYVQKLAFLMLVKLDDESFLQHQDVVEKLVQLRIEIEKIRPLENRIQYSVDKLLRAAGRKEEIGSIKEPENNGNDKDSQDSLKLHYKPNLSEFADDSDGPASENNVVKEDDKSSISSEDEEEELRSAKDGIYRPPRIRAVTMDSEKRTRHRPNHLVDEFVSSDMSSVPQSMPSVGSNLEKRGRVIHADERELQKMRERIEYEESNYTRLPKLSKKDLKKSKRVKKHDYGGEDWSLLDRKFHDDDFSNRKLDLTSRAKRRANFEDVNDGSLASPVQIGQSYRKRKKNLKRR.

2 disordered regions span residues 127-170 and 298-327; these read LSEF…GIYR and NFEDVNDGSLASPVQIGQSYRKRKKNLKRR. Ser-153, Ser-154, and Ser-309 each carry phosphoserine. The segment covering 317–327 has biased composition (basic residues); sequence YRKRKKNLKRR.

This is an uncharacterized protein from Schizosaccharomyces pombe (strain 972 / ATCC 24843) (Fission yeast).